Here is a 56-residue protein sequence, read N- to C-terminus: UPF0339 protein NMA1193/NMA1859 (56 aa).

It belongs to the UPF0339 family.

The sequence is that of UPF0339 protein NMA1193/NMA1859 from Neisseria meningitidis serogroup A / serotype 4A (strain DSM 15465 / Z2491).